The primary structure comprises 147 residues: Spermidine export protein MdtJ (147 aa).

Transmembrane regions (helical) follow at residues 1–21 (MIYW…TLSM), 31–51 (TGHV…SLAV), 54–74 (VALG…ITIF), and 81–101 (ETLS…ILLV). Over residues 105-117 (TRKPKQPNRHRGN) the composition is skewed to basic residues. A disordered region spans residues 105 to 147 (TRKPKQPNRHRGNRPPSVQGLKTQTTGHHKGVAVESGEHHAAA).

It belongs to the drug/metabolite transporter (DMT) superfamily. Small multidrug resistance (SMR) (TC 2.A.7.1) family. MdtJ subfamily. In terms of assembly, forms a complex with MdtI.

Its subcellular location is the cell inner membrane. Its function is as follows. Catalyzes the excretion of spermidine. This is Spermidine export protein MdtJ from Yersinia pseudotuberculosis serotype IB (strain PB1/+).